Consider the following 340-residue polypeptide: Phenylalanine--tRNA ligase alpha subunit (340 aa).

Residue Glu254 participates in Mg(2+) binding.

The protein belongs to the class-II aminoacyl-tRNA synthetase family. Phe-tRNA synthetase alpha subunit type 1 subfamily. Tetramer of two alpha and two beta subunits. Mg(2+) serves as cofactor.

The protein resides in the cytoplasm. It catalyses the reaction tRNA(Phe) + L-phenylalanine + ATP = L-phenylalanyl-tRNA(Phe) + AMP + diphosphate + H(+). The polypeptide is Phenylalanine--tRNA ligase alpha subunit (Chloroherpeton thalassium (strain ATCC 35110 / GB-78)).